The primary structure comprises 419 residues: Serine hydroxymethyltransferase (419 aa).

(6S)-5,6,7,8-tetrahydrofolate-binding positions include leucine 121 and 125–127 (GHL). At lysine 230 the chain carries N6-(pyridoxal phosphate)lysine. 355 to 357 (SPF) is a binding site for (6S)-5,6,7,8-tetrahydrofolate.

This sequence belongs to the SHMT family. Homodimer. The cofactor is pyridoxal 5'-phosphate.

It is found in the cytoplasm. It carries out the reaction (6R)-5,10-methylene-5,6,7,8-tetrahydrofolate + glycine + H2O = (6S)-5,6,7,8-tetrahydrofolate + L-serine. It functions in the pathway one-carbon metabolism; tetrahydrofolate interconversion. It participates in amino-acid biosynthesis; glycine biosynthesis; glycine from L-serine: step 1/1. Catalyzes the reversible interconversion of serine and glycine with tetrahydrofolate (THF) serving as the one-carbon carrier. This reaction serves as the major source of one-carbon groups required for the biosynthesis of purines, thymidylate, methionine, and other important biomolecules. Also exhibits THF-independent aldolase activity toward beta-hydroxyamino acids, producing glycine and aldehydes, via a retro-aldol mechanism. The sequence is that of Serine hydroxymethyltransferase from Streptococcus equi subsp. zooepidemicus (strain MGCS10565).